A 215-amino-acid chain; its full sequence is 3-isopropylmalate dehydratase small subunit (215 aa).

It belongs to the LeuD family. LeuD type 1 subfamily. Heterodimer of LeuC and LeuD.

The enzyme catalyses (2R,3S)-3-isopropylmalate = (2S)-2-isopropylmalate. It participates in amino-acid biosynthesis; L-leucine biosynthesis; L-leucine from 3-methyl-2-oxobutanoate: step 2/4. Functionally, catalyzes the isomerization between 2-isopropylmalate and 3-isopropylmalate, via the formation of 2-isopropylmaleate. This is 3-isopropylmalate dehydratase small subunit from Marinobacter nauticus (strain ATCC 700491 / DSM 11845 / VT8) (Marinobacter aquaeolei).